Reading from the N-terminus, the 932-residue chain is Calpain-like protease palB/cpr-8 (932 aa).

Positions 96–419 (KLHGNIFPPW…FDSLYVNWSP (324 aa)) constitute a Calpain catalytic domain. Residues C178, H346, and N366 contribute to the active site. The disordered stretch occupies residues 890–932 (QGHVTEGSDDDGGGGGGGGGGVHVEISSDGVVSIGEWEVADED). The span at 902-911 (GGGGGGGGGV) shows a compositional bias: gly residues.

It belongs to the peptidase C2 family. PalB/RIM13 subfamily.

Functionally, required for the proteolytic cleavage of the transcription factor pacc-1 in response to alkaline ambient pH. The polypeptide is Calpain-like protease palB/cpr-8 (cpr-8) (Neurospora crassa (strain ATCC 24698 / 74-OR23-1A / CBS 708.71 / DSM 1257 / FGSC 987)).